A 103-amino-acid polypeptide reads, in one-letter code: EACDDSHPCNKTLACSGNKCLIPYGSTVWDCESGFDCVIGVVCTYHGGDKVGRCTQDHRCQRGACTNPATECDEDEVCGYKEGETCYGPCRKGLTCRLGRCRP.

Post-translationally, contains 8 disulfide bonds. Expressed by the venom duct.

Its subcellular location is the secreted. Acts as a neurotoxin by inhibiting an ion channel. The sequence is that of Turripeptide OL55-like from Lophiotoma albina (Sea snail).